The primary structure comprises 622 residues: Arginine--tRNA ligase (622 aa).

Positions 127–137 (ANPVHPLHVGH) match the 'HIGH' region motif.

It belongs to the class-I aminoacyl-tRNA synthetase family.

The protein localises to the cytoplasm. It catalyses the reaction tRNA(Arg) + L-arginine + ATP = L-arginyl-tRNA(Arg) + AMP + diphosphate. This is Arginine--tRNA ligase from Ignicoccus hospitalis (strain KIN4/I / DSM 18386 / JCM 14125).